Reading from the N-terminus, the 249-residue chain is 5-oxoprolinase subunit A (249 aa).

It belongs to the LamB/PxpA family. Forms a complex composed of PxpA, PxpB and PxpC.

The catalysed reaction is 5-oxo-L-proline + ATP + 2 H2O = L-glutamate + ADP + phosphate + H(+). In terms of biological role, catalyzes the cleavage of 5-oxoproline to form L-glutamate coupled to the hydrolysis of ATP to ADP and inorganic phosphate. The polypeptide is 5-oxoprolinase subunit A (Limosilactobacillus fermentum (strain NBRC 3956 / LMG 18251) (Lactobacillus fermentum)).